A 334-amino-acid polypeptide reads, in one-letter code: D-fructose 1,6-bisphosphatase class 2/sedoheptulose 1,7-bisphosphatase (334 aa).

Mn(2+)-binding residues include Asp-33, Glu-57, Asp-85, and Glu-88. Substrate contacts are provided by residues 88-90 (EGT), Tyr-119, 164-166 (RAR), and 186-188 (DGD). A Mn(2+)-binding site is contributed by Glu-213.

Belongs to the FBPase class 2 family. In terms of assembly, homotetramer. Requires Mn(2+) as cofactor.

It carries out the reaction beta-D-fructose 1,6-bisphosphate + H2O = beta-D-fructose 6-phosphate + phosphate. It catalyses the reaction D-sedoheptulose 1,7-bisphosphate + H2O = D-sedoheptulose 7-phosphate + phosphate. The protein operates within carbohydrate biosynthesis; Calvin cycle. In terms of biological role, catalyzes the hydrolysis of fructose 1,6-bisphosphate (Fru 1,6-P2) and sedoheptulose 1,7-bisphosphate (Sed 1,7-P2) to fructose 6-phosphate and sedoheptulose 7-phosphate, respectively. The protein is D-fructose 1,6-bisphosphatase class 2/sedoheptulose 1,7-bisphosphatase of Synechococcus sp. (strain CC9902).